The primary structure comprises 384 residues: ATP phosphoribosyltransferase regulatory subunit (384 aa).

It belongs to the class-II aminoacyl-tRNA synthetase family. HisZ subfamily. As to quaternary structure, heteromultimer composed of HisG and HisZ subunits.

The protein localises to the cytoplasm. The protein operates within amino-acid biosynthesis; L-histidine biosynthesis; L-histidine from 5-phospho-alpha-D-ribose 1-diphosphate: step 1/9. Its function is as follows. Required for the first step of histidine biosynthesis. May allow the feedback regulation of ATP phosphoribosyltransferase activity by histidine. The chain is ATP phosphoribosyltransferase regulatory subunit from Azoarcus sp. (strain BH72).